Here is a 308-residue protein sequence, read N- to C-terminus: Transaldolase (308 aa).

Lys-125 serves as the catalytic Schiff-base intermediate with substrate.

Belongs to the transaldolase family. Type 1 subfamily. In terms of assembly, homodimer.

Its subcellular location is the cytoplasm. The enzyme catalyses D-sedoheptulose 7-phosphate + D-glyceraldehyde 3-phosphate = D-erythrose 4-phosphate + beta-D-fructose 6-phosphate. It participates in carbohydrate degradation; pentose phosphate pathway; D-glyceraldehyde 3-phosphate and beta-D-fructose 6-phosphate from D-ribose 5-phosphate and D-xylulose 5-phosphate (non-oxidative stage): step 2/3. In terms of biological role, transaldolase is important for the balance of metabolites in the pentose-phosphate pathway. This Pseudomonas putida (strain ATCC 47054 / DSM 6125 / CFBP 8728 / NCIMB 11950 / KT2440) protein is Transaldolase.